The chain runs to 180 residues: Pro-glucagon (180 aa).

The N-terminal stretch at 1–20 is a signal peptide; it reads MKSIYFVAGLFVMLVQGSWQ. The segment at 26–56 is disordered; the sequence is TEEKSRSFSAPQTEPLNDLDQMNEDKRHSQG. Phosphoserine is present on Ser54. Residues 84 to 89 constitute a propeptide that is removed on maturation; the sequence is NKNNIA. Phosphoserine is present on residues Ser105 and Ser108. Arg127 is modified (arginine amide). The propeptide occupies 131-145; sequence DFPEEVAIVEEFRRR. A phosphoserine mark is found at Ser150 and Ser152.

The protein belongs to the glucagon family. Proglucagon is post-translationally processed in a tissue-specific manner in pancreatic A cells and intestinal L cells. In pancreatic A cells, the major bioactive hormone is glucagon cleaved by PCSK2/PC2. In the intestinal L cells PCSK1/PC1 liberates GLP-1, GLP-2, glicentin and oxyntomodulin. GLP-1 is further N-terminally truncated by post-translational processing in the intestinal L cells resulting in GLP-1(7-37) GLP-1-(7-36)amide. The C-terminal amidation is neither important for the metabolism of GLP-1 nor for its effects on the endocrine pancreas. As to expression, glucagon is secreted in the A cells of the islets of Langerhans. GLP-1, GLP-2, oxyntomodulin and glicentin are secreted from enteroendocrine cells throughout the gastrointestinal tract. GLP-1 and GLP-2 are also secreted in selected neurons in the brain.

Its subcellular location is the secreted. Its function is as follows. Plays a key role in glucose metabolism and homeostasis. Regulates blood glucose by increasing gluconeogenesis and decreasing glycolysis. A counterregulatory hormone of insulin, raises plasma glucose levels in response to insulin-induced hypoglycemia. Plays an important role in initiating and maintaining hyperglycemic conditions in diabetes. In terms of biological role, potent stimulator of glucose-dependent insulin release. Also stimulates insulin release in response to IL6. Plays important roles on gastric motility and the suppression of plasma glucagon levels. May be involved in the suppression of satiety and stimulation of glucose disposal in peripheral tissues, independent of the actions of insulin. Has growth-promoting activities on intestinal epithelium. May also regulate the hypothalamic pituitary axis (HPA) via effects on LH, TSH, CRH, oxytocin, and vasopressin secretion. Increases islet mass through stimulation of islet neogenesis and pancreatic beta cell proliferation. Inhibits beta cell apoptosis. Stimulates intestinal growth and up-regulates villus height in the small intestine, concomitant with increased crypt cell proliferation and decreased enterocyte apoptosis. The gastrointestinal tract, from the stomach to the colon is the principal target for GLP-2 action. Plays a key role in nutrient homeostasis, enhancing nutrient assimilation through enhanced gastrointestinal function, as well as increasing nutrient disposal. Stimulates intestinal glucose transport and decreases mucosal permeability. Functionally, significantly reduces food intake. Inhibits gastric emptying in humans. Suppression of gastric emptying may lead to increased gastric distension, which may contribute to satiety by causing a sensation of fullness. Its function is as follows. May modulate gastric acid secretion and the gastro-pyloro-duodenal activity. May play an important role in intestinal mucosal growth in the early period of life. In Canis lupus familiaris (Dog), this protein is Pro-glucagon (GCG).